The following is a 179-amino-acid chain: B-cell acute lymphoblastic leukemia-expressed protein (179 aa).

Disordered stretches follow at residues 1–20 and 65–86; these read MMKD…TDLQ and RDTP…RGKA. A compositionally biased stretch (polar residues) spans 10 to 20; that stretch reads SWASEESTDLQ.

The chain is B-cell acute lymphoblastic leukemia-expressed protein (BLACE) from Homo sapiens (Human).